A 498-amino-acid polypeptide reads, in one-letter code: ADP,ATP carrier protein 1 (498 aa).

Residues 1–33 lie on the Cytoplasmic side of the membrane; the sequence is MSTSKSENYLSELRKIIWPIEQHENKKFLPLAF. The helical transmembrane segment at 34 to 54 threads the bilayer; it reads MMFCILLNYSTLRSIKDGFVV. Cysteine 37 and cysteine 85 are oxidised to a cystine. The Extracellular segment spans residues 55–67; that stretch reads TDIGTESISFLKT. The chain crosses the membrane as a helical span at residues 68–88; it reads YIVLPSAVIAMVIYVKLCDIL. The Cytoplasmic portion of the chain corresponds to 89 to 92; it reads KQEN. Residues 93 to 113 form a helical membrane-spanning segment; that stretch reads IFYVITSFFLGYFALFAFVLY. Residues 114 to 147 lie on the Extracellular side of the membrane; that stretch reads PYPDLVHPDHKTIESLSLAYPNFKWFIKIVGKWS. The chain crosses the membrane as a helical span at residues 148 to 168; that stretch reads FASFYTIAELWGTMMLSLLFW. Residues 169–184 are Cytoplasmic-facing; that stretch reads QFANQITKITEAKRFY. Residues 185–205 traverse the membrane as a helical segment; sequence SMFGLLANLALPVTSVVIGYF. Residues 206-218 are Extracellular-facing; that stretch reads LHEKTQIVSEHLK. A helical transmembrane segment spans residues 219–239; it reads FIPLFVIMITSSFLIILTYRW. Residues 240–279 are Cytoplasmic-facing; that stretch reads MNKNVLTDPRLYDPTLVKEKKAKAKLSFIESFKMIFTSKY. Residues 280 to 300 traverse the membrane as a helical segment; it reads VGYIALLIIAYGVSVNLVEGV. The Extracellular segment spans residues 301 to 320; that stretch reads WKSKVKELYPTKEAYTIYMG. Residues 321–341 traverse the membrane as a helical segment; the sequence is QFQFYQGWVAIAFMLIGSNIL. Residues 342-348 are Cytoplasmic-facing; it reads RKVSWLT. A helical transmembrane segment spans residues 349 to 369; that stretch reads AAMITPLMMFITGAAFFSFIF. Over 370 to 379 the chain is Extracellular; the sequence is FDSVIAMNLT. The chain crosses the membrane as a helical span at residues 380 to 400; the sequence is GILASSPLTLAVMFGMIQNVL. Residues 401 to 438 lie on the Cytoplasmic side of the membrane; it reads SKGVKYSLFDATKNMAYIPLDKDLRVKGQAAVEVIGGR. 436 to 442 provides a ligand contact to ATP; the sequence is GGRLGKS. A helical membrane pass occupies residues 439–459; it reads LGKSGGAIIQSTFFILFPAFG. The Extracellular segment spans residues 460–465; it reads FIEATP. Residues 466 to 486 traverse the membrane as a helical segment; that stretch reads YFASIFFIIVILWIFAVKGLN. Residues 487-498 lie on the Cytoplasmic side of the membrane; sequence KEYQVLVNKNEN.

The protein belongs to the ADP/ATP translocase tlc family.

The protein resides in the cell membrane. Its function is as follows. Provides the rickettsial cell with host ATP in exchange for rickettsial ADP. This is an obligate exchange system. This energy acquiring activity is an important component of rickettsial parasitism. In Rickettsia typhi (strain ATCC VR-144 / Wilmington), this protein is ADP,ATP carrier protein 1 (tlcA).